Consider the following 47-residue polypeptide: STKNGRDSNAQRLGVKKYGGETVKPGNILIRQRGTKIYPGHNVGMGK.

The tract at residues 1–21 is disordered; sequence STKNGRDSNAQRLGVKKYGGE.

The protein belongs to the bacterial ribosomal protein bL27 family.

The protein localises to the plastid. Its subcellular location is the chloroplast. This chain is Large ribosomal subunit protein bL27c (rpl27), found in Porphyridium purpureum (Red alga).